The primary structure comprises 360 residues: Malate dehydrogenase (360 aa).

Belongs to the LDH2/MDH2 oxidoreductase family. As to quaternary structure, homodimer.

Its subcellular location is the cytoplasm. It catalyses the reaction (S)-malate + NAD(+) = oxaloacetate + NADH + H(+). This Pyrococcus horikoshii (strain ATCC 700860 / DSM 12428 / JCM 9974 / NBRC 100139 / OT-3) protein is Malate dehydrogenase (mdh).